The primary structure comprises 160 residues: Cytochrome b6-f complex subunit 4 (160 aa).

The next 3 helical transmembrane spans lie at 36–56 (LLYVFPLTMLGTLTCIVGLSV), 95–115 (LLGVLAMAAVPLGLITVPFIE), and 131–151 (LTFIFGFFTAVWLGIGACVPI).

It belongs to the cytochrome b family. PetD subfamily. The 4 large subunits of the cytochrome b6-f complex are cytochrome b6, subunit IV (17 kDa polypeptide, petD), cytochrome f and the Rieske protein, while the 4 small subunits are petG, petL, petM and petN. The complex functions as a dimer.

It is found in the plastid. Its subcellular location is the chloroplast thylakoid membrane. Functionally, component of the cytochrome b6-f complex, which mediates electron transfer between photosystem II (PSII) and photosystem I (PSI), cyclic electron flow around PSI, and state transitions. The polypeptide is Cytochrome b6-f complex subunit 4 (Phaeodactylum tricornutum (strain CCAP 1055/1)).